A 179-amino-acid chain; its full sequence is Large ribosomal subunit protein uL5 (179 aa).

The protein belongs to the universal ribosomal protein uL5 family. Part of the 50S ribosomal subunit; part of the 5S rRNA/L5/L18/L25 subcomplex. Contacts the 5S rRNA and the P site tRNA. Forms a bridge to the 30S subunit in the 70S ribosome.

This is one of the proteins that bind and probably mediate the attachment of the 5S RNA into the large ribosomal subunit, where it forms part of the central protuberance. In the 70S ribosome it contacts protein S13 of the 30S subunit (bridge B1b), connecting the 2 subunits; this bridge is implicated in subunit movement. Contacts the P site tRNA; the 5S rRNA and some of its associated proteins might help stabilize positioning of ribosome-bound tRNAs. The protein is Large ribosomal subunit protein uL5 of Parasynechococcus marenigrum (strain WH8102).